The chain runs to 185 residues: Ribosome-recycling factor (185 aa).

It belongs to the RRF family.

It is found in the cytoplasm. Responsible for the release of ribosomes from messenger RNA at the termination of protein biosynthesis. May increase the efficiency of translation by recycling ribosomes from one round of translation to another. In Photobacterium profundum (strain SS9), this protein is Ribosome-recycling factor.